A 278-amino-acid polypeptide reads, in one-letter code: MTVLHSVDFFPSGKAPVAIEPRLPQAAFPEHHHDFHEIVIVEHGTGIHVFNGQPYTISGGTVCFVRDHDRHLYEHTDNLCLTNVLWRSPDAFQFLAGLDQLLPQEQDGYYPSHWRVNQSVLQQVRQLVGLMERAGDGMDAPAVANREILFMQLLVLLRRSSLMEGATNNDAKLNQLMAWLEDHFAEEVCWEAVAEQFSLSLRTLHRQLKQHTGLTPQRYLNRLRLIKARHLLRHSDHSVTEIAYRCGFGDSNHFSTLFRREFNWSPRDIRQGRDAIIQ.

The 99-residue stretch at 174–272 folds into the HTH araC/xylS-type domain; it reads NQLMAWLEDH…NWSPRDIRQG (99 aa). 2 DNA-binding regions (H-T-H motif) span residues 191–212 and 239–262; these read EAVAEQFSLSLRTLHRQLKQHT and VTEIAYRCGFGDSNHFSTLFRREF.

Binds DNA as a dimer.

The protein localises to the cytoplasm. Activates expression of the rhaBAD and rhaT operons. The chain is HTH-type transcriptional activator RhaS from Salmonella enteritidis PT4 (strain P125109).